A 311-amino-acid polypeptide reads, in one-letter code: Formimidoylglutamase (311 aa).

Residues histidine 130, aspartate 155, histidine 157, aspartate 159, cysteine 242, and aspartate 244 each contribute to the Mn(2+) site.

The protein belongs to the arginase family. It depends on Mn(2+) as a cofactor.

It catalyses the reaction N-formimidoyl-L-glutamate + H2O = formamide + L-glutamate. It participates in amino-acid degradation; L-histidine degradation into L-glutamate; L-glutamate from N-formimidoyl-L-glutamate (hydrolase route): step 1/1. Its function is as follows. Catalyzes the conversion of N-formimidoyl-L-glutamate to L-glutamate and formamide. This chain is Formimidoylglutamase, found in Staphylococcus aureus (strain Mu3 / ATCC 700698).